The following is a 182-amino-acid chain: UPF0149 protein PM1723 (182 aa).

This sequence belongs to the UPF0149 family.

The protein is UPF0149 protein PM1723 of Pasteurella multocida (strain Pm70).